A 265-amino-acid polypeptide reads, in one-letter code: 3-methyl-2-oxobutanoate hydroxymethyltransferase (265 aa).

Residues aspartate 43 and aspartate 82 each contribute to the Mg(2+) site. Residues 43 to 44 (DS), aspartate 82, and lysine 111 each bind 3-methyl-2-oxobutanoate. Glutamate 113 provides a ligand contact to Mg(2+). Glutamate 180 (proton acceptor) is an active-site residue.

Belongs to the PanB family. Homodecamer; pentamer of dimers. The cofactor is Mg(2+).

The protein localises to the cytoplasm. The catalysed reaction is 3-methyl-2-oxobutanoate + (6R)-5,10-methylene-5,6,7,8-tetrahydrofolate + H2O = 2-dehydropantoate + (6S)-5,6,7,8-tetrahydrofolate. Its pathway is cofactor biosynthesis; (R)-pantothenate biosynthesis; (R)-pantoate from 3-methyl-2-oxobutanoate: step 1/2. Its function is as follows. Catalyzes the reversible reaction in which hydroxymethyl group from 5,10-methylenetetrahydrofolate is transferred onto alpha-ketoisovalerate to form ketopantoate. This Francisella tularensis subsp. holarctica (strain OSU18) protein is 3-methyl-2-oxobutanoate hydroxymethyltransferase.